A 563-amino-acid chain; its full sequence is Pre-hexon-linking protein IIIa (563 aa).

Residues methionine 1–asparagine 117 form a peripentonal hexon-tethering domain region. The segment at glycine 148–aspartate 261 is binding to hexon-linking protein. Serine 235 is subject to Phosphoserine; by host. Threonine 284 is subject to Phosphothreonine; by host. The interval arginine 449–alanine 472 is disordered. A phosphoserine; by host mark is found at serine 452 and serine 456. Residues alanine 462–alanine 472 show a composition bias toward low complexity. Serine 475 and serine 486 each carry phosphoserine; by host. A disordered region spans residues lysine 522–leucine 543. The propeptide occupies glycine 549 to leucine 563.

The protein belongs to the adenoviridae hexon-linking protein IIIa family. In terms of assembly, interacts with hexon proteins; this interaction tethers the peripentonal hexons to hexons situated in the facet. Interacts with the penton protein (via N-terminus). Interacts with packaging protein 3; this interaction is required to promote correct genome packaging. Cleaved near the C-terminus by the viral protease during virion maturation to form the mature protein.

Its subcellular location is the virion. It is found in the host nucleus. Its function is as follows. Structural component of the virion that acts as a cement protein on the capsid exterior which mediates the interactions between the hexons, including the peripentonal hexons, and reaches all the way to the penton vertices. Two hexon linking proteins IIIa, one from each facet, stabilize the unique edge interface between a pair of facets. As the virus enters the host cell, hexon linking proteins IIIa are shed concomitant with virion acidification in the endosome. During virus assembly, seems to play a role in the serotype specificity of the packaging of viral DNA via its interaction with packaging protein 3. The polypeptide is Pre-hexon-linking protein IIIa (Canis lupus familiaris (Dog)).